The following is a 426-amino-acid chain: Tyrosine--tRNA ligase (426 aa).

Tyrosine 38 serves as a coordination point for L-tyrosine. A 'HIGH' region motif is present at residues proline 43 to serine 52. L-tyrosine is bound by residues tyrosine 176 and glutamine 180. The 'KMSKS' region signature appears at lysine 236–threonine 240. Position 239 (lysine 239) interacts with ATP. Positions glutamine 359–lysine 426 constitute an S4 RNA-binding domain.

The protein belongs to the class-I aminoacyl-tRNA synthetase family. TyrS type 1 subfamily. In terms of assembly, homodimer.

It localises to the cytoplasm. The catalysed reaction is tRNA(Tyr) + L-tyrosine + ATP = L-tyrosyl-tRNA(Tyr) + AMP + diphosphate + H(+). In terms of biological role, catalyzes the attachment of tyrosine to tRNA(Tyr) in a two-step reaction: tyrosine is first activated by ATP to form Tyr-AMP and then transferred to the acceptor end of tRNA(Tyr). The chain is Tyrosine--tRNA ligase from Aliivibrio fischeri (strain ATCC 700601 / ES114) (Vibrio fischeri).